Consider the following 264-residue polypeptide: Glutamate racemase (264 aa).

Substrate is bound by residues 10–11 (DS) and 42–43 (YG). Cys-73 serves as the catalytic Proton donor/acceptor. 74-75 (NT) is a binding site for substrate. Cys-183 functions as the Proton donor/acceptor in the catalytic mechanism. Substrate is bound at residue 184–185 (TH).

This sequence belongs to the aspartate/glutamate racemases family.

The catalysed reaction is L-glutamate = D-glutamate. It participates in cell wall biogenesis; peptidoglycan biosynthesis. Functionally, provides the (R)-glutamate required for cell wall biosynthesis. This is Glutamate racemase from Streptococcus suis (strain 98HAH33).